The sequence spans 184 residues: Prolyl-tRNA synthetase associated domain-containing protein 1 (184 aa).

Belongs to the PRORSD1 family.

This is Prolyl-tRNA synthetase associated domain-containing protein 1 (Prorsd1) from Danio rerio (Zebrafish).